The following is a 306-amino-acid chain: 26S proteasome regulatory subunit RPN11 (306 aa).

An MPN domain is found at 27-162 (VYISSIALLK…IDAFRLIDTG (136 aa)). 3 residues coordinate Zn(2+): His-109, His-111, and Asp-122. Residues 109 to 122 (HSHPGFGCWLSSVD) carry the JAMM motif motif.

The protein belongs to the peptidase M67A family.

Its function is as follows. Acts as a regulatory subunit of the 26 proteasome which is involved in the ATP-dependent degradation of ubiquitinated proteins. This chain is 26S proteasome regulatory subunit RPN11 (RPN11), found in Candida glabrata (strain ATCC 2001 / BCRC 20586 / JCM 3761 / NBRC 0622 / NRRL Y-65 / CBS 138) (Yeast).